The sequence spans 446 residues: Phosphoglucosamine mutase (446 aa).

S102 serves as the catalytic Phosphoserine intermediate. S102, D241, D243, and D245 together coordinate Mg(2+). S102 carries the post-translational modification Phosphoserine.

The protein belongs to the phosphohexose mutase family. Mg(2+) serves as cofactor. Activated by phosphorylation.

The enzyme catalyses alpha-D-glucosamine 1-phosphate = D-glucosamine 6-phosphate. In terms of biological role, catalyzes the conversion of glucosamine-6-phosphate to glucosamine-1-phosphate. In Yersinia enterocolitica serotype O:8 / biotype 1B (strain NCTC 13174 / 8081), this protein is Phosphoglucosamine mutase.